The sequence spans 189 residues: Interferon alpha-13 (189 aa).

The N-terminal stretch at 1–23 is a signal peptide; the sequence is MARPCAFLMVLVVLSYWSACSLG. Disulfide bonds link cysteine 24–cysteine 122 and cysteine 52–cysteine 162. Residues asparagine 94 and asparagine 101 are each glycosylated (N-linked (GlcNAc...) asparagine).

Belongs to the alpha/beta interferon family.

The protein localises to the secreted. Functionally, exhibits antiviral activity against Theiler's virus, Mengo virus and vesicular stomatitis virus. Interferons alpha stimulate the production of two enzymes: a protein kinase and an oligoadenylate synthetase. This chain is Interferon alpha-13 (Ifna13), found in Mus musculus (Mouse).